The chain runs to 227 residues: uncharacterized protein (227 aa).

Residues 1-22 (MDSVMRKSLFLLLPLVVTNAHA) form the signal peptide.

This is an uncharacterized protein from Salmonella typhi.